Here is a 241-residue protein sequence, read N- to C-terminus: Pyrroloquinoline-quinone synthase (241 aa).

Belongs to the PqqC family.

It catalyses the reaction 6-(2-amino-2-carboxyethyl)-7,8-dioxo-1,2,3,4,7,8-hexahydroquinoline-2,4-dicarboxylate + 3 O2 = pyrroloquinoline quinone + 2 H2O2 + 2 H2O + H(+). It functions in the pathway cofactor biosynthesis; pyrroloquinoline quinone biosynthesis. Its function is as follows. Ring cyclization and eight-electron oxidation of 3a-(2-amino-2-carboxyethyl)-4,5-dioxo-4,5,6,7,8,9-hexahydroquinoline-7,9-dicarboxylic-acid to PQQ. This chain is Pyrroloquinoline-quinone synthase, found in Ruegeria pomeroyi (strain ATCC 700808 / DSM 15171 / DSS-3) (Silicibacter pomeroyi).